We begin with the raw amino-acid sequence, 299 residues long: Oxygen-dependent coproporphyrinogen-III oxidase (299 aa).

Position 92 (serine 92) interacts with substrate. 2 residues coordinate a divalent metal cation: histidine 96 and histidine 106. Catalysis depends on histidine 106, which acts as the Proton donor. Asparagine 108 to arginine 110 lines the substrate pocket. The a divalent metal cation site is built by histidine 145 and histidine 175. The tract at residues tyrosine 239–glutamate 274 is important for dimerization. Substrate is bound at residue glycine 257–arginine 259.

Belongs to the aerobic coproporphyrinogen-III oxidase family. In terms of assembly, homodimer. It depends on a divalent metal cation as a cofactor.

It is found in the cytoplasm. It catalyses the reaction coproporphyrinogen III + O2 + 2 H(+) = protoporphyrinogen IX + 2 CO2 + 2 H2O. It participates in porphyrin-containing compound metabolism; protoporphyrin-IX biosynthesis; protoporphyrinogen-IX from coproporphyrinogen-III (O2 route): step 1/1. Functionally, involved in the heme biosynthesis. Catalyzes the aerobic oxidative decarboxylation of propionate groups of rings A and B of coproporphyrinogen-III to yield the vinyl groups in protoporphyrinogen-IX. In Xanthomonas oryzae pv. oryzae (strain MAFF 311018), this protein is Oxygen-dependent coproporphyrinogen-III oxidase.